A 698-amino-acid polypeptide reads, in one-letter code: Transferrin-binding protein B (698 aa).

A signal peptide spans 1-20 (MNNPLVNQAAMVLPVFLLSA). Cys21 is lipidated: N-palmitoyl cysteine. Residue Cys21 is the site of S-diacylglycerol cysteine attachment. Disordered regions lie at residues 33-58 (VDTE…QKDQ), 83-102 (IKLS…KNPS), 294-324 (FSGK…SLSG), 349-383 (GSAK…SENS), 428-479 (ESGK…GDAN), and 669-698 (TKNA…KPVQ). Polar residues predominate over residues 46–56 (DVSSEKPQAQK). Positions 299-315 (EATDKPKNDGETKEHPF) are enriched in basic and acidic residues. The span at 369 to 383 (AAASNGAAGTSSENS) shows a compositional bias: low complexity. The segment covering 460 to 476 (QAGTAENGNPAASNTAG) has biased composition (polar residues). Low complexity predominate over residues 671-686 (NATDASGNGNSASSAT).

It belongs to the TbpB family. As to quaternary structure, binds only human holo-transferrin (TF), via the TF C-terminus. Forms a large complex with TbpA and TF. Interacts via its C-terminal domain with Slam1.

It is found in the cell outer membrane. Its subcellular location is the cell surface. Its function is as follows. Neisseria acquires iron by extracting it from serum transferrin (TF) in its human host. Acts as a TF receptor and is required for TF utilization. Involved in the initial capture of TF. Helps select only those TF molecules that can be used as an iron source and concentrates them on the cell surface, maintaining the iron-loaded status of the TF C-terminal lobe until its delivery to TbpA. The sequence is that of Transferrin-binding protein B from Neisseria meningitidis serogroup A / serotype 4A (strain DSM 15465 / Z2491).